The following is a 737-amino-acid chain: Oligopeptide transporter 3 (737 aa).

The next 16 membrane-spanning stretches (helical) occupy residues 45–65 (AWFL…FFTY), 69–89 (PLTI…KFMA), 117–137 (VIIT…AYSI), 153–173 (FICG…WAGI), 215–235 (FLVA…LFPI), 255–275 (VGSG…AGIS), 289–309 (ILNV…VCYW), 357–377 (LYLS…FTAT), 418–438 (WWFY…SFVW), 446–466 (WWGM…IGVI), 478–498 (IIGQ…NLIF), 532–552 (AQLV…WWML), 604–624 (VWLF…SKIF), 629–649 (WIPL…PPAT), 650–670 (PTNI…VFNY), and 681–701 (VLSA…FFAL).

The protein belongs to the oligopeptide OPT transporter (TC 2.A.67.1) family. Strong expression in flowers, leaves and roots. Preferentially expressed in the vascular tissues of seedlings and mature plants as well as in pollen and developing embryos.

The protein resides in the membrane. Its function is as follows. May be involved in the translocation of tetra- and pentapeptides across the cellular membrane in an energy-dependent manner. Also acts as a metal transporter that could be a component of the copper transport machinery. Essential for early embryo development. This Arabidopsis thaliana (Mouse-ear cress) protein is Oligopeptide transporter 3 (OPT3).